Consider the following 109-residue polypeptide: Iron-sulfur cluster assembly protein CyaY (109 aa).

This sequence belongs to the frataxin family.

Its function is as follows. Involved in iron-sulfur (Fe-S) cluster assembly. May act as a regulator of Fe-S biogenesis. The chain is Iron-sulfur cluster assembly protein CyaY from Verminephrobacter eiseniae (strain EF01-2).